Here is a 513-residue protein sequence, read N- to C-terminus: Tryptophan--tRNA ligase 1 (513 aa).

The 'HIGH' region signature appears at 86-94; sequence PTGDPHIGH. The short motif at 393–397 is the 'KMSKS' region element; that stretch reads KMSSS.

Belongs to the class-I aminoacyl-tRNA synthetase family.

Its subcellular location is the cytoplasm. It carries out the reaction tRNA(Trp) + L-tryptophan + ATP = L-tryptophyl-tRNA(Trp) + AMP + diphosphate + H(+). The polypeptide is Tryptophan--tRNA ligase 1 (Halobacterium salinarum (strain ATCC 700922 / JCM 11081 / NRC-1) (Halobacterium halobium)).